Consider the following 269-residue polypeptide: 2-heptyl-3-hydroxy-4(1H)-quinolone dioxygenase (269 aa).

A substrate-binding site is contributed by histidine 97. Histidine 246 functions as the Proton donor/acceptor in the catalytic mechanism.

The protein belongs to the AB hydrolase superfamily. Monomer.

The catalysed reaction is 2-heptyl-3-hydroxy-4(1H)-quinolone + O2 = N-octanoylanthranilate + CO + H(+). Ring-cleaving dioxygenase involved in the degradation pathway of the Pseudomonas aeruginosa quorum sensing signal molecules HHQ (2-heptyl-4-quinolone) and PQS (2-heptyl-3-hydroxy-4(1H)-quinolone) to anthranilate. Catalyzes the cleavage of PQS to form N-octanoylanthranilate and carbon monoxide. Thus, leads to the inactivation of PQS that plays a central role in the regulation of virulence factor production by P.aeruginosa, thereby quenching the production of antimicrobials, which may contribute to the competitiveness of M.abscessus in presence of P.aeruginosa. In vitro, can also use other 2-alkyl-3-hydroxy-4(1H)-quinolone (AHQ) substrates with shorter alkyl substituents at C2, but with lower efficiency. The polypeptide is 2-heptyl-3-hydroxy-4(1H)-quinolone dioxygenase (Mycobacteroides abscessus (strain ATCC 19977 / DSM 44196 / CCUG 20993 / CIP 104536 / JCM 13569 / NCTC 13031 / TMC 1543 / L948) (Mycobacterium abscessus)).